We begin with the raw amino-acid sequence, 199 residues long: Ribonuclease HII (199 aa).

The 186-residue stretch at 14–199 (GLLAGVDEAG…SFAPVAEVLR (186 aa)) folds into the RNase H type-2 domain. A divalent metal cation-binding residues include Asp20, Glu21, and Asp112.

This sequence belongs to the RNase HII family. Requires Mn(2+) as cofactor. Mg(2+) serves as cofactor.

It localises to the cytoplasm. It catalyses the reaction Endonucleolytic cleavage to 5'-phosphomonoester.. Functionally, endonuclease that specifically degrades the RNA of RNA-DNA hybrids. The chain is Ribonuclease HII from Polaromonas sp. (strain JS666 / ATCC BAA-500).